Reading from the N-terminus, the 779-residue chain is Pleckstrin homology domain-containing family A member 4 (779 aa).

The PH domain occupies 54–153; that stretch reads PVHIRGWLHK…WLRALGKASR (100 aa). Disordered regions lie at residues 152–355, 495–669, and 694–766; these read SRAE…LPGP, AGLG…SGGH, and SPER…QEEG. A Phosphoserine modification is found at Ser-164. The span at 183 to 193 shows a compositional bias: basic and acidic residues; sequence VNRREEGRTSE. Low complexity-rich tracts occupy residues 246 to 259 and 324 to 334; these read PRPR…PPLS and QSTQVSSGSST. Basic and acidic residues predominate over residues 517–527; that stretch reads QREESSERESL. Over residues 528–540 the composition is skewed to low complexity; it reads SESLELSSPQSPE. Ser-562 carries the phosphoserine modification. A compositionally biased stretch (polar residues) spans 567 to 580; sequence RASSPECRQQSSPL. Composition is skewed to low complexity over residues 608–627 and 649–659; these read GLSL…RTLS and SSGSWSSPRHS. A compositionally biased stretch (polar residues) spans 720–740; sequence VTSSPTSHKANSATTGFSCQG.

The protein localises to the cytoplasm. Its subcellular location is the membrane. Functionally, binds specifically to phosphatidylinositol 3-phosphate (PtdIns3P), but not to other phosphoinositides. In Rattus norvegicus (Rat), this protein is Pleckstrin homology domain-containing family A member 4 (Plekha4).